Reading from the N-terminus, the 493-residue chain is MSTSDRVRAILHATIQAYRGAPAYRQRGDVFCQLDRIGARLAEPLRIALAGTLKAGKSTLVNALVGDDIAPTDATEATRIVTWFRHGPTPRVTANHRGGRRANVPITRRGGLSFDLRRINPAELIDLEVEWPAEELIDATIVDTPGTSSLACDASERTLRLLVPADGVPRVDAVVFLLRTLNAADVALLKQIGGLVGGSVGALGIIGVASRADEIGAGRIDAMLSANDVAKRFTRELNQMGICQAVVPVSGLLALTARTLRQTEFIALRKLAGAERTELNRALLSVDRFVRRDSPLPVDAGIRAQLLERFGMFGIRMSIAVLAAGVTDSTGLAAELLERSGLVALRNVIDQQFAQRSDMLKAHTALVSLRRFVQTHPVPATPYVIADIDPLLADTHAFEELRMLSLLPSRATTLNDDEIASLRRIIGGSGTSAAARLGLDPANSREAPRAALAAAQHWRRRAAHPLNDPFTTRACRAAVRSAEAMVAEFSARR.

This Mycobacterium tuberculosis (strain CDC 1551 / Oshkosh) protein is Isoniazid-induced protein IniC (iniC).